The sequence spans 128 residues: Ribosome-binding factor A (128 aa).

Belongs to the RbfA family. Monomer. Binds 30S ribosomal subunits, but not 50S ribosomal subunits or 70S ribosomes.

The protein resides in the cytoplasm. In terms of biological role, one of several proteins that assist in the late maturation steps of the functional core of the 30S ribosomal subunit. Associates with free 30S ribosomal subunits (but not with 30S subunits that are part of 70S ribosomes or polysomes). Required for efficient processing of 16S rRNA. May interact with the 5'-terminal helix region of 16S rRNA. In Geobacillus thermodenitrificans (strain NG80-2), this protein is Ribosome-binding factor A.